A 311-amino-acid polypeptide reads, in one-letter code: Methionyl-tRNA formyltransferase (311 aa).

110–113 lines the (6S)-5,6,7,8-tetrahydrofolate pocket; the sequence is SLLP.

This sequence belongs to the Fmt family.

The catalysed reaction is L-methionyl-tRNA(fMet) + (6R)-10-formyltetrahydrofolate = N-formyl-L-methionyl-tRNA(fMet) + (6S)-5,6,7,8-tetrahydrofolate + H(+). In terms of biological role, attaches a formyl group to the free amino group of methionyl-tRNA(fMet). The formyl group appears to play a dual role in the initiator identity of N-formylmethionyl-tRNA by promoting its recognition by IF2 and preventing the misappropriation of this tRNA by the elongation apparatus. The chain is Methionyl-tRNA formyltransferase from Acidobacterium capsulatum (strain ATCC 51196 / DSM 11244 / BCRC 80197 / JCM 7670 / NBRC 15755 / NCIMB 13165 / 161).